We begin with the raw amino-acid sequence, 236 residues long: MKMMDANEIISFIQNSKKSTPVKVYIKGSLEGIDFGPSAKTFITGNTGVVFGEWQEIQAALEANKEKIDDYVIENDRRNSAIPLLDLKGVKARIEPGAIIRDQVEIGDNAVIMMGAVINIGAVVGEGTMIDMNAVLGGRATVGKNCHVGAGAVLAGVIEPPSAKPVIVEDDVVIGANAVILEGVTVGKGAVVAAGAIVVEDVPPYTVVAGVPARVIKQIDEKTRAKTEIKQELRQL.

This sequence belongs to the transferase hexapeptide repeat family. DapH subfamily.

The catalysed reaction is (S)-2,3,4,5-tetrahydrodipicolinate + acetyl-CoA + H2O = L-2-acetamido-6-oxoheptanedioate + CoA. It participates in amino-acid biosynthesis; L-lysine biosynthesis via DAP pathway; LL-2,6-diaminopimelate from (S)-tetrahydrodipicolinate (acetylase route): step 1/3. Its function is as follows. Catalyzes the transfer of an acetyl group from acetyl-CoA to tetrahydrodipicolinate. This Geobacillus sp. (strain WCH70) protein is 2,3,4,5-tetrahydropyridine-2,6-dicarboxylate N-acetyltransferase.